We begin with the raw amino-acid sequence, 171 residues long: S-ribosylhomocysteine lyase (171 aa).

Residues His-54, His-58, and Cys-128 each coordinate Fe cation.

It belongs to the LuxS family. In terms of assembly, homodimer. Requires Fe cation as cofactor.

The enzyme catalyses S-(5-deoxy-D-ribos-5-yl)-L-homocysteine = (S)-4,5-dihydroxypentane-2,3-dione + L-homocysteine. In terms of biological role, involved in the synthesis of autoinducer 2 (AI-2) which is secreted by bacteria and is used to communicate both the cell density and the metabolic potential of the environment. The regulation of gene expression in response to changes in cell density is called quorum sensing. Catalyzes the transformation of S-ribosylhomocysteine (RHC) to homocysteine (HC) and 4,5-dihydroxy-2,3-pentadione (DPD). In Campylobacter curvus (strain 525.92), this protein is S-ribosylhomocysteine lyase.